A 382-amino-acid polypeptide reads, in one-letter code: 2-epi-valiolone synthase (382 aa).

Residues 92–95 (EKSK), 124–128 (GVVVD), 148–149 (TT), K161, K170, and 188–191 (HLRT) contribute to the NAD(+) site. Residues E203, H266, and H283 each coordinate Zn(2+).

The protein belongs to the sugar phosphate cyclases superfamily. EVS family. Requires NAD(+) as cofactor. The cofactor is Co(2+). It depends on Zn(2+) as a cofactor.

The enzyme catalyses D-sedoheptulose 7-phosphate = 2-epi-valiolone + phosphate. In terms of biological role, catalyzes the conversion of sedoheptulose 7-phosphate to 2-epi-valiolone, which may serve as an alternative precursor for aminocyclitol biosynthesis. The chain is 2-epi-valiolone synthase from Actinosynnema mirum (strain ATCC 29888 / DSM 43827 / JCM 3225 / NBRC 14064 / NCIMB 13271 / NRRL B-12336 / IMRU 3971 / 101).